Consider the following 154-residue polypeptide: Transcriptional repressor NrdR (154 aa).

Residues 1-22 (MRCPFCGNDDTQVKDSRPTEDN) form a disordered region. A zinc finger lies at 3 to 34 (CPFCGNDDTQVKDSRPTEDNSAIRRRRFCPAC). Residues 11-22 (TQVKDSRPTEDN) show a composition bias toward basic and acidic residues. Residues 49–139 (LTVVKSGGSR…VYKDFREVTD (91 aa)) form the ATP-cone domain.

Belongs to the NrdR family. Zn(2+) serves as cofactor.

Its function is as follows. Negatively regulates transcription of bacterial ribonucleotide reductase nrd genes and operons by binding to NrdR-boxes. The protein is Transcriptional repressor NrdR of Rhodospirillum centenum (strain ATCC 51521 / SW).